The primary structure comprises 1130 residues: Serine/threonine-protein kinase LATS1 (1130 aa).

Residues 1 to 11 (MKRSEKPEGYR) are compositionally biased toward basic and acidic residues. The segment at 1 to 71 (MKRSEKPEGY…PRQVRNPPKF (71 aa)) is disordered. A compositionally biased stretch (polar residues) spans 19–30 (PASNYTVSSRQM). Over residues 46-64 (DAAKAEHNMSKMSTEDPRQ) the composition is skewed to basic and acidic residues. A UBA domain is found at 100 to 141 (EVNPQMLQDLQAAGFDEDMVIQALQKTNNRSIEAAIEFISKM). Positions 149 to 276 (EQMAAAAARP…SWEPNSQTKR (128 aa)) are disordered. Residues 167–179 (NVQQSVNRKQSWK) are compositionally biased toward polar residues. Residues 235 to 268 (NPPPPPQVRSVTPPPPPRGQTPPPRGTTPPPPSW) are compositionally biased toward pro residues. Thr-246 carries the post-translational modification Phosphothreonine. Phosphoserine is present on Ser-278. 4 disordered regions span residues 294–321 (GAWQ…RGIS), 365–405 (AGTV…NGSI), 432–484 (NWPQ…PSAT), and 515–631 (THPS…ESRI). Residues 300–312 (YPPPPLNTSPMNP) show a composition bias toward pro residues. The PPxY motif 1 motif lies at 373-376 (PPPY). Positions 381–405 (ANGQSPSALQTGGSAAPSSYTNGSI) are enriched in polar residues. Residues 434–447 (PQSSSAPAQSSPSS) are compositionally biased toward low complexity. The segment covering 454-482 (WQPNIPVRSNSFNNPLGNRASHSANSQPS) has biased composition (polar residues). Ser-464 is modified (phosphoserine; by NUAK1 and NUAK2). Positions 526-655 (TVQPSPFPEG…HVENVLKSHQ (130 aa)) are interaction with YAP1. The PPxY motif 2 motif lies at 556–559 (PPPY). Residues 579-609 (PSKEDQPSLPKEDESEKSYENVDSGDKEKKQ) show a composition bias toward basic and acidic residues. Ser-613 is modified (phosphoserine). The segment covering 621 to 630 (KKDEERRESR) has biased composition (basic and acidic residues). The residue at position 674 (Ser-674) is a Phosphoserine. Residues 705-1010 (FVKIKTLGIG…ADEIKAHPFF (306 aa)) enclose the Protein kinase domain. Residues 711-719 (LGIGAFGEV) and Lys-734 contribute to the ATP site. The active-site Proton acceptor is the Asp-828. Ser-909 carries the phosphoserine; by STK3/MST2 modification. One can recognise an AGC-kinase C-terminal domain in the interval 1011–1090 (KTIDFSSDLR…RRFFDDNGYP (80 aa)). Residue Thr-1079 is modified to Phosphothreonine; by STK3/MST2. The segment at 1104–1130 (SQGSEQQSDEDDQNTGSEIKNRDLVYV) is disordered.

The protein belongs to the protein kinase superfamily. AGC Ser/Thr protein kinase family. As to quaternary structure, complexes with CDK1 in early mitosis. LATS1-associated CDK1 has no mitotic cyclin partner and no apparent kinase activity. Binds phosphorylated ZYX, locating this protein to the mitotic spindle and suggesting a role for actin regulatory proteins during mitosis. Binds to and colocalizes with LIMK1 at the actomyosin contractile ring during cytokinesis. Interacts (via PPxY motif 2) with YAP1 (via WW domains). Interacts with MOB1A and MOB1B. Interacts with LIMD1, WTIP and AJUBA. Interacts with ESR1, DCAF1 and DCAF13; probably recruits DCAF1 and DCAF13 to ESR1 to promote ESR1 ubiquitination and ubiquitin-mediated proteasomal degradation. Interacts with STK3/MST2; this interaction is inhibited in the presence of DLG5. Interacts with SCRIB in the presence of DLG5. Interacts with WWTR1/TAZ. Interacts with WWC1, WWC2 and WWC3 (via their WW domains). Mg(2+) is required as a cofactor. In terms of processing, autophosphorylated and phosphorylated during M-phase of the cell cycle. Phosphorylated by STK3/MST2 at Ser-909 and Thr-1079, which results in its activation. Phosphorylated by MAP4Ks; in parallel to STK3/MST2 and resulting to its activation. Phosphorylation at Ser-464 by NUAK1 and NUAK2 leads to decreased protein level and is required to regulate cellular senescence and cellular ploidy. Expressed in all adult tissues examined except for lung and kidney.

The protein localises to the cytoplasm. It is found in the cytoskeleton. It localises to the microtubule organizing center. Its subcellular location is the centrosome. The protein resides in the spindle. The protein localises to the midbody. It is found in the spindle pole body. The catalysed reaction is L-seryl-[protein] + ATP = O-phospho-L-seryl-[protein] + ADP + H(+). The enzyme catalyses L-threonyl-[protein] + ATP = O-phospho-L-threonyl-[protein] + ADP + H(+). Negative regulator of YAP1 in the Hippo signaling pathway that plays a pivotal role in organ size control and tumor suppression by restricting proliferation and promoting apoptosis. The core of this pathway is composed of a kinase cascade wherein STK3/MST2 and STK4/MST1, in complex with its regulatory protein SAV1, phosphorylates and activates LATS1/2 in complex with its regulatory protein MOB1, which in turn phosphorylates and inactivates YAP1 oncoprotein and WWTR1/TAZ. Phosphorylation of YAP1 by LATS1 inhibits its translocation into the nucleus to regulate cellular genes important for cell proliferation, cell death, and cell migration. Acts as a tumor suppressor which plays a critical role in maintenance of ploidy through its actions in both mitotic progression and the G1 tetraploidy checkpoint. Negatively regulates G2/M transition by down-regulating CDK1 kinase activity. Involved in the control of p53 expression. Affects cytokinesis by regulating actin polymerization through negative modulation of LIMK1. May also play a role in endocrine function. Plays a role in mammary gland epithelial cell differentiation, both through the Hippo signaling pathway and the intracellular estrogen receptor signaling pathway by promoting the degradation of ESR1. Acts as an activator of the NLRP3 inflammasome by mediating phosphorylation of 'Ser-265' of NLRP3 following NLRP3 palmitoylation, promoting NLRP3 activation by NEK7. The protein is Serine/threonine-protein kinase LATS1 of Homo sapiens (Human).